The following is a 63-amino-acid chain: Small ribosomal subunit protein eS17 (63 aa).

It belongs to the eukaryotic ribosomal protein eS17 family.

This chain is Small ribosomal subunit protein eS17, found in Methanococcus maripaludis (strain DSM 14266 / JCM 13030 / NBRC 101832 / S2 / LL).